A 351-amino-acid chain; its full sequence is MLNSNTKDHEDLRIYQIIDANLDRAREGLRVLEDWARFGLGKEKYVEKIKNFRQILGKNHLEVYKQSRNQIEDNCKGLTHQEQLNRKTSEQIISSNSARVQEALRVIEEFSRLHNNELSKIASEIRYEIYTVEIDLLSFSKFKKSEKILKENDLYVITDQKDNLLEIIEEILIAGVKIIQHRFKTGTDQDHLQEAIEIKNLCKRYNSLFIVNDRLDIALASNADGIHLGQDDLDLKTTRKLFGYSKIIGISANNAIDISNALDEGCDYIGIGPVFETTTKKNKKPLGIENIKTLTKDLNIPWFAIGGIKSNNISYLKRNGFKKVALVSELMNSEDPKEDAMMILKELSHEN.

A unknown region spans residues 1–128 (MLNSNTKDHE…SKIASEIRYE (128 aa)). Residues 129 to 351 (IYTVEIDLLS…MILKELSHEN (223 aa)) form a thiamine-phosphate synthase region. 4-amino-2-methyl-5-(diphosphooxymethyl)pyrimidine is bound by residues 180–184 (QHRFK) and Asn-212. Positions 213 and 232 each coordinate Mg(2+). Residue Ser-251 participates in 4-amino-2-methyl-5-(diphosphooxymethyl)pyrimidine binding. 277 to 279 (TTT) lines the 2-[(2R,5Z)-2-carboxy-4-methylthiazol-5(2H)-ylidene]ethyl phosphate pocket. Residue Lys-280 participates in 4-amino-2-methyl-5-(diphosphooxymethyl)pyrimidine binding. Gly-307 contacts 2-[(2R,5Z)-2-carboxy-4-methylthiazol-5(2H)-ylidene]ethyl phosphate.

It belongs to the thiamine-phosphate synthase family. Mg(2+) serves as cofactor.

The catalysed reaction is 2-[(2R,5Z)-2-carboxy-4-methylthiazol-5(2H)-ylidene]ethyl phosphate + 4-amino-2-methyl-5-(diphosphooxymethyl)pyrimidine + 2 H(+) = thiamine phosphate + CO2 + diphosphate. It carries out the reaction 2-(2-carboxy-4-methylthiazol-5-yl)ethyl phosphate + 4-amino-2-methyl-5-(diphosphooxymethyl)pyrimidine + 2 H(+) = thiamine phosphate + CO2 + diphosphate. It catalyses the reaction 4-methyl-5-(2-phosphooxyethyl)-thiazole + 4-amino-2-methyl-5-(diphosphooxymethyl)pyrimidine + H(+) = thiamine phosphate + diphosphate. It functions in the pathway cofactor biosynthesis; thiamine diphosphate biosynthesis; thiamine phosphate from 4-amino-2-methyl-5-diphosphomethylpyrimidine and 4-methyl-5-(2-phosphoethyl)-thiazole: step 1/1. Functionally, condenses 4-methyl-5-(beta-hydroxyethyl)thiazole monophosphate (THZ-P) and 2-methyl-4-amino-5-hydroxymethyl pyrimidine pyrophosphate (HMP-PP) to form thiamine monophosphate (TMP). The protein is Thiamine-phosphate synthase of Prochlorococcus marinus (strain AS9601).